The sequence spans 430 residues: tRNA(Ile)-lysidine synthase (430 aa).

Residue 24 to 29 (SGGLDS) participates in ATP binding.

The protein belongs to the tRNA(Ile)-lysidine synthase family.

Its subcellular location is the cytoplasm. It catalyses the reaction cytidine(34) in tRNA(Ile2) + L-lysine + ATP = lysidine(34) in tRNA(Ile2) + AMP + diphosphate + H(+). Functionally, ligates lysine onto the cytidine present at position 34 of the AUA codon-specific tRNA(Ile) that contains the anticodon CAU, in an ATP-dependent manner. Cytidine is converted to lysidine, thus changing the amino acid specificity of the tRNA from methionine to isoleucine. The chain is tRNA(Ile)-lysidine synthase from Haemophilus influenzae (strain ATCC 51907 / DSM 11121 / KW20 / Rd).